The chain runs to 1207 residues: MRGDSFSMSIENLPDSPMGSRKKKMQIRKVFDKMTEWVTPWRSNLESPREMMILRGDVEQDEFQYASSHCLSSYYSVFVVRLAIMVMLAILIGLLTVLTWHFTRIYTKQSLQTLAYGLRYELLQRPVLRMWSVLNTTSELTTAQVKLSEYVIKKYDKPTTQEELVEMYQAMKDVTWALFASAKALNAITINYRNGFVQAFHRDPASSSTFYIFSDLKNYSISGTGPEDVSGWNNKSIHGNMSAIWYQQQLDPVTGENLGKPLKIPPDDLINIAGISQVPDGEASWHVTVSKYMDSPLLSAALPVFDASNKSIVAVVGVTTALYSVGQLMRDLVEVHGGHIYLTSQEGYLLATSTDGPLLKNTSNGPQLMKATDSEEWVIKSGAQWLEKTYGSKRPHVVHAENVKLGDQRYYIDSFYLNLKRLPIVGVVIIPRKFIMGKVDERAFKTLIILISASVCIFFIGCVCILILTNGVSKEMKLRAELIRQLDARRRAEASSNYKSQFLANMSHELRTPMAAVIGLLDILISDDCLSNEQYATVTQIRKCSTALLRLLNNILDLSKVESGKLVLEEAEFDLGRELEGLVDMFSVQCINHNVETVLDLSDDMPALVRGDSARLVQIFANLISNSIKFTTTGHIILRGWCENINSLHDEMSVSVDRRKPWAPMKTKQVQHRNHLQKSCKNANKMVLWFEVDDTGCGIDPSKWDSVFESFEQADPSTTRTHGGTGLGLCIVRNLVNKMGGEIKVVQKNGLGTLMRLYLILSTPDTVDQNIQPDFSKYGLVVMLSMYGSTARMITSKWLRKHGIATVEASDWNELTQIIRDLLETGSRDNSFDSQHNISDPLRAELSNIVEIKNPVFVIVVDIGVLDLTTNIWKEQLNYLDRFSNKAKFAWLLKHDTSNTVKTELRRKGHVMMVNKPLYKAKMIQILEAVIKNRKRGLCNDLRNRGNGSDESHDCLEIDPTQFDTCSSDDSSETSGEKQVDKSVKPSTLHSPVLKNYLIDATTSNDDSTSASMTQKNPEEEDWKDRLYSGIALDGKNQKSLEGIRILLAEDTPVLQRVATIMLEKMGATVTAVWDGQQAVDSLNYKSINAQAPTEEHKSFEEETANKVTTRETSLRNSSPYDLILMDCQMPKMDGYEATKAIRRAEIGTELHIPIVALTAHAMSSDEAKCLEVGMDAYLTKPIDRKLMVSTILSLTKPSAFQTSLSA.

Over residues 1–10 the composition is skewed to polar residues; it reads MRGDSFSMSI. Residues 1-20 form a disordered region; that stretch reads MRGDSFSMSIENLPDSPMGS. Residues 1 to 81 are Cytoplasmic-facing; that stretch reads MRGDSFSMSI…SSYYSVFVVR (81 aa). The helical transmembrane segment at 82–102 threads the bilayer; that stretch reads LAIMVMLAILIGLLTVLTWHF. The Extracellular portion of the chain corresponds to 103-446; sequence TRIYTKQSLQ…GKVDERAFKT (344 aa). Residues 447–467 traverse the membrane as a helical segment; the sequence is LIILISASVCIFFIGCVCILI. Residues 468–1207 lie on the Cytoplasmic side of the membrane; the sequence is LTNGVSKEMK…PSAFQTSLSA (740 aa). A Histidine kinase domain is found at 505 to 763; it reads NMSHELRTPM…LMRLYLILST (259 aa). At histidine 508 the chain carries Phosphohistidine; by autocatalysis. Disordered stretches follow at residues 964 to 987 and 1000 to 1021; these read DTCS…VKPS and DATT…PEEE. Over residues 975–984 the composition is skewed to basic and acidic residues; sequence SGEKQVDKSV. The span at 1000–1014 shows a compositional bias: low complexity; it reads DATTSNDDSTSASMT. Positions 1045-1196 constitute a Response regulatory domain; it reads RILLAEDTPV…LMVSTILSLT (152 aa). Aspartate 1127 carries the post-translational modification 4-aspartylphosphate.

In terms of assembly, interacts with AHP2, depending of the phosphorylation state of Asp-1075 in the receiver domain, but probably not with AHP1 and AHP3. Post-translationally, autophosphorylated predominantly on His residues. Activation probably requires a transfer of a phosphate group between a His in the transmitter domain and an Asp of the receiver domain. In terms of tissue distribution, mostly expressed in roots, and, to a lower extent, in stems, leaves and flowers.

Its subcellular location is the cell membrane. The catalysed reaction is ATP + protein L-histidine = ADP + protein N-phospho-L-histidine.. Functionally, functions as an osmosensor histidine kinase that detects water stress and transmits the stress signal to a downstream MAPK cascade. This protein undergoes an ATP-dependent autophosphorylation at a conserved histidine residue in the kinase core, and a phosphoryl group is then transferred to a conserved aspartate residue in the receiver domain. Positive regulator of drought and salt stress responses, and abscisic acid (ABA) signaling. Confers drought tolerance, probably by regulating levels of ABA accumulation. Plays a redundant role in regulating plant growth and development. Required for the regulation of desiccation processes during seed formation. This is Histidine kinase 1 (AHK1) from Arabidopsis thaliana (Mouse-ear cress).